The sequence spans 331 residues: MKVTVLVGGVGGARFLLGVQHLLGLGQFARDDARDPDAHEVTAVVNVGDDTWMFGVRICPDLDTCMYTLGGGIDPDRGWGHRDETWHAKEELAAYGVQPDWFGLGDRDLATHLVRSQMLRAGYPLSQVTEALCDRWNPGARLLPASDDRSETHVVITDPDTDERRAIHFQEWWVRYRAKVPTHSFAFVGADKATTAPGVTDAIADADVVLLAPSNPVVSIGSILAIPGIRGALRSTSAKIIGYSPIIAGKPLRGMADECLSVIGVASTSEAVGRHYGARSGTGILDGWLVHEGDSAQIDGVEVEAVPLLMTDPATTAEMVRAGVRLAGVTL.

Asp63 contributes to the 7,8-didemethyl-8-hydroxy-5-deazariboflavin binding site.

Belongs to the CofD family. As to quaternary structure, homodimer. It depends on Mg(2+) as a cofactor.

The catalysed reaction is enolpyruvoyl-2-diphospho-5'-guanosine + 7,8-didemethyl-8-hydroxy-5-deazariboflavin = dehydro coenzyme F420-0 + GMP + H(+). Its pathway is cofactor biosynthesis; coenzyme F420 biosynthesis. Catalyzes the transfer of the phosphoenolpyruvate moiety from enoylpyruvoyl-2-diphospho-5'-guanosine (EPPG) to 7,8-didemethyl-8-hydroxy-5-deazariboflavin (FO) with the formation of dehydro coenzyme F420-0 and GMP. This chain is Phosphoenolpyruvate transferase, found in Mycobacterium sp. (strain JLS).